We begin with the raw amino-acid sequence, 469 residues long: MRVSDPAKLDILPDDACEIRLTIAASECDKYPAKQHARKVASKLGVRDGLIYLVGKATINWGDSDQPRPFRQRRYFYYLSGVDEADCYLTYDIRNDLLTIYVPNFSLQHAIWMGPTLTVEEARQRYDADRFRYYAALRSDLNSWVDQYNKDSPIYVLHSSQKPEISAKELRSREVKDEYEIRMIRKANEISALAHRNILQNIHRMSNESEIEGLFLDTCVSHGAKNQSYEIIAGSGPNAAVLHYVKNDEPLNGRQLVCLDAGAEWNCYASDVTRTIPLGKDWPSSHAKDIYAIVEEMQEECIRRVKPGLRFRDLHELAHIIAIKGLQELGVLKAGTVEEIRRSGASSIFFPHGLGHHVGLEVHDVSEQPITANGHLSREFVPQMSTPLLQEGMVITIEPGVYFNKLALENSRSLPLAKYIDFDKAEQYIPVGGVRIEDDLLVTSTGYENLTMAPKGKEMLEILRGRSKQ.

Residues Asp-260, Asp-271, Glu-398, and Glu-437 each coordinate Mn(2+).

Belongs to the peptidase M24B family. Mn(2+) is required as a cofactor.

It carries out the reaction Release of any N-terminal amino acid, including proline, that is linked to proline, even from a dipeptide or tripeptide.. Functionally, catalyzes the removal of a penultimate prolyl residue from the N-termini of peptides. The protein is Probable Xaa-Pro aminopeptidase AN0832 of Emericella nidulans (strain FGSC A4 / ATCC 38163 / CBS 112.46 / NRRL 194 / M139) (Aspergillus nidulans).